Consider the following 410-residue polypeptide: ORC1-type DNA replication protein 4 (410 aa).

ATP contacts are provided by residues 73–77 (TGKSL), Tyr220, and Arg232.

The protein belongs to the CDC6/cdc18 family.

In terms of biological role, involved in regulation of DNA replication. The protein is ORC1-type DNA replication protein 4 (orc4) of Halobacterium salinarum (strain ATCC 700922 / JCM 11081 / NRC-1) (Halobacterium halobium).